The chain runs to 113 residues: Photosystem II reaction center Psb28 protein (113 aa).

It belongs to the Psb28 family. Part of the photosystem II complex.

Its subcellular location is the cellular thylakoid membrane. In Trichodesmium erythraeum (strain IMS101), this protein is Photosystem II reaction center Psb28 protein.